We begin with the raw amino-acid sequence, 411 residues long: Argininosuccinate synthase (411 aa).

Residues 10-18 and Ala-37 each bind ATP; that span reads AYSGGLDTS. Positions 89 and 94 each coordinate L-citrulline. Residue Gly-119 coordinates ATP. 3 residues coordinate L-aspartate: Thr-121, Asn-125, and Asp-126. Asn-125 is an L-citrulline binding site. Residues Arg-129, Ser-178, Ser-187, Glu-263, and Tyr-275 each contribute to the L-citrulline site.

It belongs to the argininosuccinate synthase family. Type 1 subfamily. Homotetramer.

The protein localises to the cytoplasm. It carries out the reaction L-citrulline + L-aspartate + ATP = 2-(N(omega)-L-arginino)succinate + AMP + diphosphate + H(+). The protein operates within amino-acid biosynthesis; L-arginine biosynthesis; L-arginine from L-ornithine and carbamoyl phosphate: step 2/3. The polypeptide is Argininosuccinate synthase (Aeromonas hydrophila subsp. hydrophila (strain ATCC 7966 / DSM 30187 / BCRC 13018 / CCUG 14551 / JCM 1027 / KCTC 2358 / NCIMB 9240 / NCTC 8049)).